The sequence spans 132 residues: Small ribosomal subunit protein uS8 (132 aa).

This sequence belongs to the universal ribosomal protein uS8 family. In terms of assembly, part of the 30S ribosomal subunit. Contacts proteins S5 and S12.

Functionally, one of the primary rRNA binding proteins, it binds directly to 16S rRNA central domain where it helps coordinate assembly of the platform of the 30S subunit. This Cereibacter sphaeroides (strain ATCC 17029 / ATH 2.4.9) (Rhodobacter sphaeroides) protein is Small ribosomal subunit protein uS8.